Here is an 874-residue protein sequence, read N- to C-terminus: Alanine--tRNA ligase (874 aa).

4 residues coordinate Zn(2+): histidine 562, histidine 566, cysteine 664, and histidine 668.

Belongs to the class-II aminoacyl-tRNA synthetase family. Zn(2+) serves as cofactor.

Its subcellular location is the cytoplasm. It catalyses the reaction tRNA(Ala) + L-alanine + ATP = L-alanyl-tRNA(Ala) + AMP + diphosphate. Functionally, catalyzes the attachment of alanine to tRNA(Ala) in a two-step reaction: alanine is first activated by ATP to form Ala-AMP and then transferred to the acceptor end of tRNA(Ala). Also edits incorrectly charged Ser-tRNA(Ala) and Gly-tRNA(Ala) via its editing domain. This is Alanine--tRNA ligase from Neisseria meningitidis serogroup A / serotype 4A (strain DSM 15465 / Z2491).